The primary structure comprises 485 residues: MRRSTTISIASKANKFLNLCLLQKGNPVIVPFISRFWGRTFSTKRSSMNLEEEIDLFCKMIQSRPLPSIVDFSKVLSKIAKSKNYDLVISLFHHMEVCGIGHDLYSYNIVINCLCRCSRFVIALSVVGKMMKFGYEPDVVTVSSLINGFCQGNRVFDAIDLVSKMEEMGFRPDVVIYNTIIDGSCKIGLVNDAVELFDRMERDGVRADAVTYNSLVAGLCCSGRWSDAARLMRDMVMRDIVPNVITFTAVIDVFVKEGKFSEAMKLYEEMTRRCVDPDVFTYNSLINGLCMHGRVDEAKQMLDLMVTKGCLPDVVTYNTLINGFCKSKRVDEGTKLFREMAQRGLVGDTITYNTIIQGYFQAGRPDAAQEIFSRMDSRPNIRTYSILLYGLCMNWRVEKALVLFENMQKSEIELDITTYNIVIHGMCKIGNVEDAWDLFRSLSCKGLKPDVVSYTTMISGFCRKRQWDKSDLLYRKMQEDGLLPL.

PPR repeat units follow at residues 68–102 (SIVD…GIGH), 103–137 (DLYS…GYEP), 138–172 (DVVT…GFRP), 173–207 (DVVI…GVRA), 208–242 (DAVT…DIVP), 243–277 (NVIT…CVDP), 278–312 (DVFT…GCLP), 313–347 (DVVT…GLVG), 348–378 (DTIT…MDSR), 380–414 (NIRT…EIEL), 415–449 (DITT…GLKP), and 450–484 (DVVS…GLLP).

The protein belongs to the PPR family. P subfamily.

The sequence is that of Pentatricopeptide repeat-containing protein At1g62720 from Arabidopsis thaliana (Mouse-ear cress).